A 70-amino-acid chain; its full sequence is Cecropin-P1 (70 aa).

The signal sequence occupies residues 1-13 (MFLIYLFVQTAES). Positions 45-70 (RRRFVAEQDAIHSRVSREVPTLSDSV) are cleaved as a propeptide — removed in mature form.

As to expression, expressed in the body wall, intestine, uterus and ovary.

It localises to the secreted. In terms of biological role, has antibacterial activity against several Gram-positive and Gram-negative bacteria. Is weakly active against yeasts. Acts by a nonpore mechanism. This is Cecropin-P1 (ASCEC-1) from Ascaris suum (Pig roundworm).